A 39-amino-acid chain; its full sequence is ATFTIRNNXPYTVWAAASPGGGRRLDMARIWGRTNXNFD.

The protein belongs to the thaumatin family. Post-translationally, contains intrachain disulfide bonds.

In terms of biological role, may be an important antifungal protein. The polypeptide is Osmotin-like protein (Hevea brasiliensis (Para rubber tree)).